Reading from the N-terminus, the 251-residue chain is MNEPTPLSRSFGYQSVDEREREQRIRRVFSAVAARYDLMNDLMSFGIHRLWKRRFVRMAAPQAGQHIVDLAGGTGDVAALMAAADRRVTVVDPSAEMMAVGQARGHAHVDWQVGSAEQLPLADASVDTLTISFGIRNATRIDVALREIHRVLKPGGRFLCLEFSTPAWWLRPFYNLFSFTVIPRLGAWIANSPEAYTYLVESIRRFPDQRGFAAMISAAGFESVRWHDLSFGIACVHVGTRAAAATPAGTA.

3 residues coordinate S-adenosyl-L-methionine: T74, D92, and S132.

This sequence belongs to the class I-like SAM-binding methyltransferase superfamily. MenG/UbiE family.

It carries out the reaction a 2-demethylmenaquinol + S-adenosyl-L-methionine = a menaquinol + S-adenosyl-L-homocysteine + H(+). The enzyme catalyses a 2-methoxy-6-(all-trans-polyprenyl)benzene-1,4-diol + S-adenosyl-L-methionine = a 5-methoxy-2-methyl-3-(all-trans-polyprenyl)benzene-1,4-diol + S-adenosyl-L-homocysteine + H(+). Its pathway is quinol/quinone metabolism; menaquinone biosynthesis; menaquinol from 1,4-dihydroxy-2-naphthoate: step 2/2. It functions in the pathway cofactor biosynthesis; ubiquinone biosynthesis. Its function is as follows. Methyltransferase required for the conversion of demethylmenaquinol (DMKH2) to menaquinol (MKH2) and the conversion of 2-polyprenyl-6-methoxy-1,4-benzoquinol (DDMQH2) to 2-polyprenyl-3-methyl-6-methoxy-1,4-benzoquinol (DMQH2). The protein is Ubiquinone/menaquinone biosynthesis C-methyltransferase UbiE of Rubrivivax gelatinosus (strain NBRC 100245 / IL144).